The primary structure comprises 212 residues: Riboflavin kinase (212 aa).

The tract at residues 1–83 (MTELYCERKT…NLLRYFDIAS (83 aa)) is unknown. A riboflavin kinase region spans residues 84 to 212 (IKLVGRVVTG…GDRVELEVYL (129 aa)). Position 93 to 98 (93 to 98 (GLGEGA)) interacts with CDP. T122 and N124 together coordinate Mg(2+). Residues T179 and E187 each contribute to the FMN site. Residue 192–195 (VRVR) participates in CDP binding.

This sequence belongs to the archaeal riboflavin kinase family. It depends on Mg(2+) as a cofactor.

The catalysed reaction is riboflavin + CTP = CDP + FMN + H(+). It participates in cofactor biosynthesis; FMN biosynthesis; FMN from riboflavin (CTP route): step 1/1. Functionally, catalyzes the CTP-dependent phosphorylation of riboflavin (vitamin B2) to form flavin mononucleotide (FMN). This Pyrobaculum calidifontis (strain DSM 21063 / JCM 11548 / VA1) protein is Riboflavin kinase (ribK).